The sequence spans 404 residues: Cysteine desulfurase IscS (404 aa).

Pyridoxal 5'-phosphate contacts are provided by residues 75–76 (AT), N155, Q183, and 203–205 (SGH). K206 is modified (N6-(pyridoxal phosphate)lysine). T243 is a pyridoxal 5'-phosphate binding site. Catalysis depends on C328, which acts as the Cysteine persulfide intermediate. C328 is a [2Fe-2S] cluster binding site.

The protein belongs to the class-V pyridoxal-phosphate-dependent aminotransferase family. NifS/IscS subfamily. As to quaternary structure, homodimer. Forms a heterotetramer with IscU, interacts with other sulfur acceptors. Requires pyridoxal 5'-phosphate as cofactor.

It localises to the cytoplasm. It catalyses the reaction (sulfur carrier)-H + L-cysteine = (sulfur carrier)-SH + L-alanine. It participates in cofactor biosynthesis; iron-sulfur cluster biosynthesis. Functionally, master enzyme that delivers sulfur to a number of partners involved in Fe-S cluster assembly, tRNA modification or cofactor biosynthesis. Catalyzes the removal of elemental sulfur atoms from cysteine to produce alanine. Functions as a sulfur delivery protein for Fe-S cluster synthesis onto IscU, an Fe-S scaffold assembly protein, as well as other S acceptor proteins. The polypeptide is Cysteine desulfurase IscS (Shewanella amazonensis (strain ATCC BAA-1098 / SB2B)).